A 512-amino-acid polypeptide reads, in one-letter code: FACT complex subunit pob3 (512 aa).

A compositionally biased stretch (acidic residues) spans 460–504 (LDDEDEEGDEEMEEALSEDEDFQAESESDVAEEYDENAESSDEEG). The segment at 460 to 512 (LDDEDEEGDEEMEEALSEDEDFQAESESDVAEEYDENAESSDEEGASGAEGSE) is disordered.

Belongs to the SSRP1 family. As to quaternary structure, forms a stable heterodimer with spt16. The spt16-pob3 dimer weakly associates with multiple molecules of nhp6 to form the FACT complex. Interacts with abo1.

Its subcellular location is the nucleus. It is found in the chromosome. Its function is as follows. Component of the FACT complex, a general chromatin factor that acts to reorganize nucleosomes. The FACT complex is involved in multiple processes that require DNA as a template such as mRNA elongation, DNA replication and DNA repair. During transcription elongation the FACT complex acts as a histone chaperone that both destabilizes and restores nucleosomal structure. It facilitates the passage of RNA polymerase II and transcription by promoting the dissociation of one histone H2A-H2B dimer from the nucleosome, then subsequently promotes the reestablishment of the nucleosome following the passage of RNA polymerase II. The sequence is that of FACT complex subunit pob3 from Schizosaccharomyces pombe (strain 972 / ATCC 24843) (Fission yeast).